The chain runs to 426 residues: Protein arginine N-methyltransferase 2 (426 aa).

Disordered stretches follow at residues 65 to 88 and 155 to 175; these read DEEEDVKSNGVQTNGDRQTHGQES and DEEMEEDGEQEQEQQDAAVAA. The span at 73 to 88 shows a compositional bias: polar residues; the sequence is NGVQTNGDRQTHGQES. Over residues 155-168 the composition is skewed to acidic residues; the sequence is DEEMEEDGEQEQEQ. The 220-residue stretch at 207-426 folds into the RMT2 domain; the sequence is PSVTSSRYLN…YRLPLCKYMD (220 aa). S-adenosyl-L-methionine is bound by residues Y214, M243, 263–268, 284–286, 311–312, and D331; these read HGMGIV, EAH, and WQ.

It belongs to the class I-like SAM-binding methyltransferase superfamily. RMT2 methyltransferase family. In terms of assembly, monomer.

The protein localises to the cytoplasm. Its subcellular location is the nucleus. S-adenosyl-L-methionine-dependent protein-arginine N-methyltransferase that methylates the delta-nitrogen atom of arginine residues to form N5-methylarginine (type IV) in target proteins. Monomethylates ribosomal protein L12. This is Protein arginine N-methyltransferase 2 from Emericella nidulans (strain FGSC A4 / ATCC 38163 / CBS 112.46 / NRRL 194 / M139) (Aspergillus nidulans).